The sequence spans 432 residues: Putative D-alanyl-D-alanine carboxypeptidase (432 aa).

The chain crosses the membrane as a helical; Signal-anchor span at residues 7–25 (ATVLLTFSLSAFAVEYPVL).

This sequence belongs to the peptidase S12 family. YfeW subfamily.

It is found in the cell inner membrane. It catalyses the reaction Preferential cleavage: (Ac)2-L-Lys-D-Ala-|-D-Ala. Also transpeptidation of peptidyl-alanyl moieties that are N-acyl substituents of D-alanine.. This chain is Putative D-alanyl-D-alanine carboxypeptidase, found in Salmonella choleraesuis (strain SC-B67).